The sequence spans 1045 residues: Suppression of tumorigenicity 18 protein (1045 aa).

Disordered regions lie at residues 38–90 (KKRR…NDHA), 158–228 (KAES…YNRK), and 340–364 (PRVT…RREA). The span at 52-63 (NKRKSLLMKPRH) shows a compositional bias: basic residues. Composition is skewed to basic and acidic residues over residues 69 to 90 (GCKE…NDHA) and 159 to 177 (AESD…NGRD). 6 CCHHC-type zinc fingers span residues 357–400 (PRPE…PLEI), 401–444 (LAMH…KLAM), 713–756 (RDLK…LKSL), 757–800 (MAAN…GIKM), 805–848 (EEKE…QKEN), and 858–901 (KLNK…IKKV). Residues Cys-366, Cys-371, His-384, Cys-390, Cys-410, Cys-415, His-428, Cys-434, Cys-722, Cys-727, His-740, Cys-746, Cys-766, Cys-771, His-784, Cys-790, Cys-814, Cys-819, His-832, Cys-838, Cys-867, Cys-872, His-885, and Cys-891 each coordinate Zn(2+). A coiled-coil region spans residues 918–987 (IDGDEEIRHL…KELAGLSQAL (70 aa)).

Belongs to the MYT1 family.

It localises to the nucleus. Its function is as follows. Repressor that binds to DNA sequences containing a bipartite element consisting of a direct repeat of the sequence 5'-AAAGTTT-3' separated by 2-9 nucleotides. Represses basal transcription activity from target promoters. The chain is Suppression of tumorigenicity 18 protein (St18) from Mus musculus (Mouse).